The following is a 352-amino-acid chain: DNA polymerase IV (352 aa).

The UmuC domain occupies 4–185 (IIHVDMDCFF…LPLSKIPGVG (182 aa)). Positions 8 and 103 each coordinate Mg(2+). E104 is a catalytic residue.

Belongs to the DNA polymerase type-Y family. Monomer. The cofactor is Mg(2+).

The protein resides in the cytoplasm. It catalyses the reaction DNA(n) + a 2'-deoxyribonucleoside 5'-triphosphate = DNA(n+1) + diphosphate. Functionally, poorly processive, error-prone DNA polymerase involved in untargeted mutagenesis. Copies undamaged DNA at stalled replication forks, which arise in vivo from mismatched or misaligned primer ends. These misaligned primers can be extended by PolIV. Exhibits no 3'-5' exonuclease (proofreading) activity. May be involved in translesional synthesis, in conjunction with the beta clamp from PolIII. The sequence is that of DNA polymerase IV from Yersinia pseudotuberculosis serotype O:1b (strain IP 31758).